Consider the following 314-residue polypeptide: Pathogenicity locus probable regulatory protein HrpR (314 aa).

Positions Thr-11–Pro-239 constitute a Sigma-54 factor interaction domain. Residues Gly-39–Asp-46 and Ser-101–Glu-110 each bind ATP. A DNA-binding region (H-T-H motif) is located at residues Phe-281–Lys-300.

In terms of biological role, member of the two-component regulatory system HrpR/HrpS that regulates the activation of the sigma factor hrpL which itself induces the expression of hprD as well as other hrp loci which are involved in plant pathogenicity, hrmA and avr genes. Probably interacts with sigma-54. This Pseudomonas syringae pv. syringae protein is Pathogenicity locus probable regulatory protein HrpR (hrpR).